The sequence spans 331 residues: CRISPR-associated endonuclease Cas1 (331 aa).

Mn(2+) is bound by residues E155, H221, and E236.

This sequence belongs to the CRISPR-associated endonuclease Cas1 family. Homodimer, forms a heterotetramer with a Cas2 homodimer. Requires Mg(2+) as cofactor. It depends on Mn(2+) as a cofactor.

CRISPR (clustered regularly interspaced short palindromic repeat), is an adaptive immune system that provides protection against mobile genetic elements (viruses, transposable elements and conjugative plasmids). CRISPR clusters contain spacers, sequences complementary to antecedent mobile elements, and target invading nucleic acids. CRISPR clusters are transcribed and processed into CRISPR RNA (crRNA). Acts as a dsDNA endonuclease. Involved in the integration of spacer DNA into the CRISPR cassette. This chain is CRISPR-associated endonuclease Cas1, found in Methanopyrus kandleri (strain AV19 / DSM 6324 / JCM 9639 / NBRC 100938).